We begin with the raw amino-acid sequence, 95 residues long: UPF0045 protein CPE1503 (95 aa).

This sequence belongs to the UPF0045 family.

This Clostridium perfringens (strain 13 / Type A) protein is UPF0045 protein CPE1503.